Here is a 593-residue protein sequence, read N- to C-terminus: Efflux pump FUB11 (593 aa).

Residues 1–45 (MAIDPQPSSPSLSSETIANDTIGNDNNVNEPSVEPKTQEHQHTVP) are disordered. The segment covering 9 to 30 (SPSLSSETIANDTIGNDNNVNE) has biased composition (polar residues). N-linked (GlcNAc...) asparagine glycosylation is present at asparagine 19. 12 helical membrane passes run 98–118 (WAFV…SSAY), 135–155 (VATL…LVWA), 167–187 (FFFT…AGSI), 195–215 (FLTG…IADM), 227–247 (MFSG…GFLG), 254–274 (WLHG…TVFI), 337–357 (IYIS…PIVF), 367–387 (IGGL…ISFA), 410–430 (LPPA…FAWT), 438–458 (IVPI…FMAL), 468–488 (IFAA…GAAF), and 503–523 (WASS…FLFY). The disordered stretch occupies residues 570 to 593 (THNSHASAAHSHGHRRSLSYTRSA).

Belongs to the major facilitator superfamily. DHA1 family. Polyamines/proton antiporter (TC 2.A.1.2.16) subfamily.

The protein resides in the cell membrane. Efflux pump involved in export of fusaric acid, a mycotoxin with low to moderate toxicity to animals and humans, but with high phytotoxic properties. Constitutes a self-protecting mechanism of the fungus against critical levels of FSA within the cell. In Gibberella moniliformis (strain M3125 / FGSC 7600) (Maize ear and stalk rot fungus), this protein is Efflux pump FUB11.